The sequence spans 271 residues: Tritrans,polycis-undecaprenyl-diphosphate synthase (geranylgeranyl-diphosphate specific) (271 aa).

The active site involves aspartate 50. Aspartate 50 provides a ligand contact to Mg(2+). Substrate contacts are provided by residues 51 to 54 (GNRR), phenylalanine 55, histidine 67, and 95 to 97 (STE). The Proton acceptor role is filled by asparagine 98. Substrate-binding positions include arginine 101, arginine 220, and 226–228 (RLS). Glutamate 239 provides a ligand contact to Mg(2+).

Belongs to the UPP synthase family. As to quaternary structure, homodimer. Mg(2+) serves as cofactor.

It catalyses the reaction geranylgeranyl diphosphate + 7 isopentenyl diphosphate = tri-trans,hepta-cis-undecaprenyl diphosphate + 7 diphosphate. In terms of biological role, catalyzes the sequential condensation of isopentenyl diphosphate (IPP) with geranylgeranyl diphosphate (GGPP) to yield (2Z,6Z,10Z,14Z,18Z,22Z,26Z,30E,34E,38E)-undecaprenyl diphosphate (tritrans,heptacis-UPP). It is probably the precursor of glycosyl carrier lipids. In Methanopyrus kandleri (strain AV19 / DSM 6324 / JCM 9639 / NBRC 100938), this protein is Tritrans,polycis-undecaprenyl-diphosphate synthase (geranylgeranyl-diphosphate specific).